A 215-amino-acid chain; its full sequence is Small ribosomal subunit protein uS7 (215 aa).

This sequence belongs to the universal ribosomal protein uS7 family. Part of the 30S ribosomal subunit.

One of the primary rRNA binding proteins, it binds directly to 16S rRNA where it nucleates assembly of the head domain of the 30S subunit. Is located at the subunit interface close to the decoding center. This chain is Small ribosomal subunit protein uS7, found in Thermococcus onnurineus (strain NA1).